The chain runs to 87 residues: Cell division topological specificity factor (87 aa).

This sequence belongs to the MinE family.

In terms of biological role, prevents the cell division inhibition by proteins MinC and MinD at internal division sites while permitting inhibition at polar sites. This ensures cell division at the proper site by restricting the formation of a division septum at the midpoint of the long axis of the cell. The sequence is that of Cell division topological specificity factor from Rhizobium meliloti (strain 1021) (Ensifer meliloti).